A 333-amino-acid chain; its full sequence is Diacylglycerol acyltransferase/mycolyltransferase Ag85C (333 aa).

An N-terminal signal peptide occupies residues 1 to 44 (MKFLQQMRKLFGLAAKFPARLTIAVIGTALLAGLVGVVGDTAIA). Residue 86–87 (LR) coordinates substrate. Positions 102–112 (FEEYYHSGLSV) are fibronectin-binding. 2 residues coordinate substrate: Ser-170 and Asn-198. Ser-170 functions as the Nucleophile in the catalytic mechanism. Residue Glu-274 is part of the active site. Substrate contacts are provided by residues 276–279 (LTLS) and 306–308 (HSW). His-306 is a catalytic residue.

It belongs to the mycobacterial A85 antigen family. As to quaternary structure, homodimer.

It is found in the secreted. The enzyme catalyses an acyl-CoA + a 1,2-diacyl-sn-glycerol = a triacyl-sn-glycerol + CoA. It carries out the reaction 2 alpha,alpha'-trehalose 6-mycolate = alpha,alpha'-trehalose 6,6'-bismycolate + alpha,alpha-trehalose. Its function is as follows. The antigen 85 proteins (FbpA, FbpB, FbpC) are responsible for the high affinity of mycobacteria to fibronectin, a large adhesive glycoprotein, which facilitates the attachment of M.tuberculosis to murine alveolar macrophages (AMs). They also help to maintain the integrity of the cell wall by catalyzing the transfer of mycolic acids to cell wall arabinogalactan and through the synthesis of alpha,alpha-trehalose dimycolate (TDM, cord factor). They catalyze the transfer of a mycoloyl residue from one molecule of alpha,alpha-trehalose monomycolate (TMM) to another TMM, leading to the formation of TDM. The polypeptide is Diacylglycerol acyltransferase/mycolyltransferase Ag85C (fbpC) (Mycobacterium leprae (strain TN)).